Here is a 219-residue protein sequence, read N- to C-terminus: MAFLLHQARFYTTVNHLRDLPPTVQPEIAFAGRSNAGKSTAINVLCNQKRLAFASKTPGRTQHINYFSVGPAAEPVANLVDLPGYGYAEVPGAAKAHWEMLLSTYLATRSQLCGLILMMDSRRPLTELDRRMIEWFAPTGKPIHTLLTKCDKLTRQESINALRTTQKGLDAYRDQGVQGKLTVQLFSALKRTGLDEAHALIESWVRPSVADEKNEPVAQ.

One can recognise an EngB-type G domain in the interval 24–207; that stretch reads VQPEIAFAGR…HALIESWVRP (184 aa). GTP contacts are provided by residues 32–39, 59–63, 81–84, 148–151, and 186–188; these read GRSNAGKS, GRTQH, DLPG, TKCD, and FSA. Mg(2+) is bound by residues S39 and T61.

This sequence belongs to the TRAFAC class TrmE-Era-EngA-EngB-Septin-like GTPase superfamily. EngB GTPase family. Requires Mg(2+) as cofactor.

In terms of biological role, necessary for normal cell division and for the maintenance of normal septation. The sequence is that of Probable GTP-binding protein EngB from Burkholderia multivorans (strain ATCC 17616 / 249).